Consider the following 34-residue polypeptide: Trypsin inhibitor 2 (34 aa).

Positions 1–34 (SGSDGGVCPKILKKCRRDSDCPGACICRGNGYCG) form a cross-link, cyclopeptide (Ser-Gly). Positions 4–5 (DG) form a cross-link, (2-aminosuccinimidyl)acetic acid (Asp-Gly); alternate. Residues 4-5 (DG) constitute a cross-link (isoaspartyl glycine isopeptide (Asp-Gly); alternate). 3 disulfides stabilise this stretch: Cys8/Cys25, Cys15/Cys27, and Cys21/Cys33.

In terms of processing, a cyclic succinimide probably forms by loss of water between Asp-4 and Gly-5, that can then rehydrate to either the original peptide bond or to a beta-aspartyl isopeptide bond. Three isoforms of MCoTI-II are detected, two with the parent molecular weight, corresponding to the unmodified and proposed isopeptide forms, and one with a molecular weight 18 Da lower, corresponding to a succinimide cross-linked form. This is a cyclic peptide.

Its subcellular location is the secreted. Inhibits trypsin; probably participates in a plant defense mechanism. The protein is Trypsin inhibitor 2 of Momordica cochinchinensis (Spiny bitter cucumber).